The primary structure comprises 197 residues: Holliday junction branch migration complex subunit RuvA (197 aa).

The interval 1–64 (MIDSIVGIIQ…LSELECYGFL (64 aa)) is domain I. The segment at 65–143 (TREERELFLK…KEFKVASTSG (79 aa)) is domain II. Positions 144 to 152 (KEEKTYEKL) are flexible linker. The segment at 152–197 (LEEISLALLSLGYDIDEVNQVLSSEDFSELSLEDGIKLALKKLSKI) is domain III.

This sequence belongs to the RuvA family. As to quaternary structure, homotetramer. Forms an RuvA(8)-RuvB(12)-Holliday junction (HJ) complex. HJ DNA is sandwiched between 2 RuvA tetramers; dsDNA enters through RuvA and exits via RuvB. An RuvB hexamer assembles on each DNA strand where it exits the tetramer. Each RuvB hexamer is contacted by two RuvA subunits (via domain III) on 2 adjacent RuvB subunits; this complex drives branch migration. In the full resolvosome a probable DNA-RuvA(4)-RuvB(12)-RuvC(2) complex forms which resolves the HJ.

The protein localises to the cytoplasm. Its function is as follows. The RuvA-RuvB-RuvC complex processes Holliday junction (HJ) DNA during genetic recombination and DNA repair, while the RuvA-RuvB complex plays an important role in the rescue of blocked DNA replication forks via replication fork reversal (RFR). RuvA specifically binds to HJ cruciform DNA, conferring on it an open structure. The RuvB hexamer acts as an ATP-dependent pump, pulling dsDNA into and through the RuvAB complex. HJ branch migration allows RuvC to scan DNA until it finds its consensus sequence, where it cleaves and resolves the cruciform DNA. The polypeptide is Holliday junction branch migration complex subunit RuvA (Caldicellulosiruptor bescii (strain ATCC BAA-1888 / DSM 6725 / KCTC 15123 / Z-1320) (Anaerocellum thermophilum)).